Here is a 274-residue protein sequence, read N- to C-terminus: Histone H1.1 (274 aa).

Disordered stretches follow at residues 1 to 63 (MSEV…SSHP) and 129 to 155 (PSAS…PATV). Ser-2 is modified (N-acetylserine). Residues 16–25 (TAADAPVTDA) are compositionally biased toward low complexity. Positions 40-49 (NVKEVKEKKT) are enriched in basic and acidic residues. An H15 domain is found at 61–130 (SHPTYEEMIK…KVKASFKLPS (70 aa)). Residues 129-145 (PSASAKASSPKAAAEKS) show a composition bias toward low complexity. Lys-161 participates in a covalent cross-link: Glycyl lysine isopeptide (Lys-Gly) (interchain with G-Cter in ubiquitin). Disordered stretches follow at residues 167 to 233 (ASKA…PAKK) and 249 to 274 (KTPV…RVKK). Low complexity-rich tracts occupy residues 175–185 (AVKPKTAAAKK) and 221–233 (AAKT…PAKK).

The protein belongs to the histone H1/H5 family.

The protein resides in the nucleus. The protein localises to the chromosome. Histones H1 are necessary for the condensation of nucleosome chains into higher-order structures. The polypeptide is Histone H1.1 (Arabidopsis thaliana (Mouse-ear cress)).